A 908-amino-acid polypeptide reads, in one-letter code: Protein translocase subunit SecA (908 aa).

ATP is bound by residues Gln90, 108–112 (GEGKT), and Asp503. Residues 846-864 (AAAAEAPVAPAPQPAAAAP) are compositionally biased toward low complexity. Residues 846-884 (AAAAEAPVAPAPQPAAAAPQPTPELVGAEAGEPDPAAWG) form a disordered region. Zn(2+) contacts are provided by Cys892, Cys894, Cys903, and His904.

It belongs to the SecA family. In terms of assembly, monomer and homodimer. Part of the essential Sec protein translocation apparatus which comprises SecA, SecYEG and auxiliary proteins SecDF-YajC and YidC. Zn(2+) is required as a cofactor.

It localises to the cell inner membrane. The protein resides in the cytoplasm. The catalysed reaction is ATP + H2O + cellular proteinSide 1 = ADP + phosphate + cellular proteinSide 2.. Part of the Sec protein translocase complex. Interacts with the SecYEG preprotein conducting channel. Has a central role in coupling the hydrolysis of ATP to the transfer of proteins into and across the cell membrane, serving both as a receptor for the preprotein-SecB complex and as an ATP-driven molecular motor driving the stepwise translocation of polypeptide chains across the membrane. This Cereibacter sphaeroides (strain ATCC 17029 / ATH 2.4.9) (Rhodobacter sphaeroides) protein is Protein translocase subunit SecA.